The chain runs to 189 residues: UPF0301 protein PST_3956 (189 aa).

Belongs to the UPF0301 (AlgH) family.

This chain is UPF0301 protein PST_3956, found in Stutzerimonas stutzeri (strain A1501) (Pseudomonas stutzeri).